A 252-amino-acid chain; its full sequence is GTP cyclohydrolase 1 type 2 homolog (252 aa).

Positions 65, 66, 103, 220, and 224 each coordinate a divalent metal cation.

This sequence belongs to the GTP cyclohydrolase I type 2/NIF3 family. As to quaternary structure, homohexamer.

This Pseudomonas aeruginosa (strain ATCC 15692 / DSM 22644 / CIP 104116 / JCM 14847 / LMG 12228 / 1C / PRS 101 / PAO1) protein is GTP cyclohydrolase 1 type 2 homolog.